Consider the following 324-residue polypeptide: UDP-N-acetylenolpyruvoylglucosamine reductase (324 aa).

The 182-residue stretch at 36-217 (FRAGGLAELM…IRAEMDAVRA (182 aa)) folds into the FAD-binding PCMH-type domain. Residue Arg183 is part of the active site. Ser232 acts as the Proton donor in catalysis. The active site involves Glu302.

The protein belongs to the MurB family. FAD serves as cofactor.

Its subcellular location is the cytoplasm. It carries out the reaction UDP-N-acetyl-alpha-D-muramate + NADP(+) = UDP-N-acetyl-3-O-(1-carboxyvinyl)-alpha-D-glucosamine + NADPH + H(+). It participates in cell wall biogenesis; peptidoglycan biosynthesis. In terms of biological role, cell wall formation. This chain is UDP-N-acetylenolpyruvoylglucosamine reductase, found in Rhizobium rhizogenes (strain K84 / ATCC BAA-868) (Agrobacterium radiobacter).